The following is a 368-amino-acid chain: tRNA-specific 2-thiouridylase MnmA (368 aa).

ATP-binding positions include 11–18 (GMSGGVDS) and Met37. The segment at 97–99 (NPD) is interaction with target base in tRNA. Cys102 acts as the Nucleophile in catalysis. A disulfide bond links Cys102 and Cys199. Gly127 is a binding site for ATP. Residues 149 to 151 (KDQ) form an interaction with tRNA region. Cys199 acts as the Cysteine persulfide intermediate in catalysis. The tract at residues 311–312 (RY) is interaction with tRNA.

This sequence belongs to the MnmA/TRMU family. Interacts with TusE.

It localises to the cytoplasm. It catalyses the reaction S-sulfanyl-L-cysteinyl-[protein] + uridine(34) in tRNA + AH2 + ATP = 2-thiouridine(34) in tRNA + L-cysteinyl-[protein] + A + AMP + diphosphate + H(+). Catalyzes the 2-thiolation of uridine at the wobble position (U34) of tRNA(Lys), tRNA(Glu) and tRNA(Gln), leading to the formation of s(2)U34, the first step of tRNA-mnm(5)s(2)U34 synthesis. Sulfur is provided by IscS, via a sulfur-relay system. Binds ATP and its substrate tRNAs. This chain is tRNA-specific 2-thiouridylase MnmA, found in Salmonella typhimurium (strain LT2 / SGSC1412 / ATCC 700720).